Consider the following 381-residue polypeptide: MDQSPFPDIAHQTASFSDGLVLDCGTTLQRLEVAYRTYGSLNAEKSNAILICHALTGDQYVAEPHPLTGKPGWWNALVGAGKPVDTDRFFVICANVLGGCMGSTGPRSRRDHGADEPWSIDFPAITVQDMVRAQKKLVDWLGIERLFAVVGGSMGGMQVLAWASLFPDRVFAAVPIATAPYHSAQNIAFHEVGRQAIYTDPDFHGGHYRTHGVIPARGLAVARMTAHITYLSEAALTRKFGRRLQRQNALAAPVFGERFAVESYLEHQGSSFVRRFDANSYLVITRAMDYFDLAADHGGSLSAAFRGTKTRFLLVSFSSDWLFPTAESRAMARALNQVAANVSFVEIVSDKGHDAFLLDEPDFHRTVAGFISGAAEAAGLQ.

In terms of domain architecture, AB hydrolase-1 spans 47–359 (NAILICHALT…DKGHDAFLLD (313 aa)). Catalysis depends on Ser153, which acts as the Nucleophile. A substrate-binding site is contributed by Arg223. Catalysis depends on residues Asp320 and His353. Asp354 contributes to the substrate binding site.

Belongs to the AB hydrolase superfamily. MetX family. Homodimer.

It localises to the cytoplasm. The catalysed reaction is L-homoserine + acetyl-CoA = O-acetyl-L-homoserine + CoA. Its pathway is amino-acid biosynthesis; L-methionine biosynthesis via de novo pathway; O-acetyl-L-homoserine from L-homoserine: step 1/1. Its function is as follows. Transfers an acetyl group from acetyl-CoA to L-homoserine, forming acetyl-L-homoserine. This Acidiphilium cryptum (strain JF-5) protein is Homoserine O-acetyltransferase.